The chain runs to 316 residues: BRCA2 and CDKN1A-interacting protein (316 aa).

The tract at residues M1–E57 is disordered. A compositionally biased stretch (acidic residues) spans E25–E57. Phosphoserine is present on residues S44 and S114. Residues I61–K169 form an interaction with BRCA2 region. The tract at residues M163–K261 is interaction with CDKN1A. Residue S283 is modified to Phosphoserine.

It belongs to the BCP1 family. In terms of assembly, interacts with BRCA2, CDKN1A and MTDH/LYRIC. Interacts with DCTN1/p150-glued and ACTR1A/ARP1. Interacts with alpha-, beta- and gamma-tubulins. Interacts with TENT5C; the interaction has no effect on TENT5C poly(A) polymerase function. In terms of tissue distribution, expressed in the testes (at protein level).

The protein resides in the nucleus. The protein localises to the cytoplasm. Its subcellular location is the cytoskeleton. It localises to the microtubule organizing center. It is found in the centrosome. The protein resides in the centriole. The protein localises to the spindle pole. Functionally, during interphase, required for microtubule organizing and anchoring activities. During mitosis, required for the organization and stabilization of the spindle pole. May promote cell cycle arrest by enhancing the inhibition of CDK2 activity by CDKN1A. May be required for repair of DNA damage by homologous recombination in conjunction with BRCA2. May not be involved in non-homologous end joining (NHEJ). This chain is BRCA2 and CDKN1A-interacting protein (Bccip), found in Mus musculus (Mouse).